We begin with the raw amino-acid sequence, 290 residues long: HTH-type transcriptional activator RhaR (290 aa).

The HTH araC/xylS-type domain occupies 179–277 (DLIMSALQQS…GMTPRDYRQR (99 aa)). 2 consecutive DNA-binding regions (H-T-H motif) follow at residues 196–217 (ANFCHKNQLVERSLKQLFRQQT) and 244–267 (ISDIAARCGFEDSNYFSAVFTREA).

As to quaternary structure, binds DNA as a dimer.

It localises to the cytoplasm. Functionally, activates expression of the rhaSR operon in response to L-rhamnose. The chain is HTH-type transcriptional activator RhaR from Yersinia pseudotuberculosis serotype O:3 (strain YPIII).